Consider the following 381-residue polypeptide: Acetylornithine deacetylase (381 aa).

A Zn(2+)-binding site is contributed by His-79. Asp-81 is an active-site residue. Position 111 (Asp-111) interacts with Zn(2+). Residue Glu-143 is part of the active site. Residues Glu-144, Glu-168, and His-354 each coordinate Zn(2+).

It belongs to the peptidase M20A family. ArgE subfamily. In terms of assembly, homodimer. Requires Zn(2+) as cofactor. Co(2+) is required as a cofactor. Glutathione serves as cofactor.

It localises to the cytoplasm. It carries out the reaction N(2)-acetyl-L-ornithine + H2O = L-ornithine + acetate. It participates in amino-acid biosynthesis; L-arginine biosynthesis; L-ornithine from N(2)-acetyl-L-ornithine (linear): step 1/1. In terms of biological role, catalyzes the hydrolysis of the amide bond of N(2)-acetylated L-amino acids. Cleaves the acetyl group from N-acetyl-L-ornithine to form L-ornithine, an intermediate in L-arginine biosynthesis pathway, and a branchpoint in the synthesis of polyamines. The protein is Acetylornithine deacetylase of Buchnera aphidicola subsp. Acyrthosiphon pisum (strain 5A).